Consider the following 668-residue polypeptide: MGKIHELSNLLANQIAAGEVIERPASVVKELVENAIDAGATQIDIVVENAGETFIRVVDNGAGIDPVDVPLAFTRHATSKITDRHDLFNIVSLGFRGEALPSIAAIADVELRTKTTETTTGLNYHIKGGKEISATPANGRRGTVITVRDLFYNTPARLKYLKKHQTELSKIVDIINRLALSYTGIAFTVSADGRSLLRTTGNGNQQQVIAGIYGRDNAQKMLAIAGENDDFNITGFISLPELTRGSREYLTVLVNGRYIKNFAVSNAVIRGYGSKLMVGRFPMGVININTNPLLIDVNVHPQKSEIRLSKETELAELLVTTIKNRLAEENLIPDAYETLYGQQNKQQNTQNTQNTFTPKAPWIAAEDSMDGHNAEKMSSQPIRRSPSLVTPVEITKREELSSDRVLTFTQKYTNELPQPVFETDNVVEQQVTEPTVTYQSQYSETGSHSQETLPLSEQKPTGFPALDYIGQMHGTFLFAQSEDSFFLIDQHAAQERVNYEFYREQIGQVTNDQQRLLVPITIDYSVSEMLAIADHQPELMALGLRLEPFGATTMIIREHPTWFEKGQEEETVREMTDWLLRDGQLTVAQFREKAAIMMSCKRAIRANMHLSDTAARQLLAHLSMAENPYNCPHGRPVLTQFTLTEMEKMFKRIQESHEKWESYDNHPF.

The segment at T437–K459 is disordered. Positions Y438–K459 are enriched in polar residues.

This sequence belongs to the DNA mismatch repair MutL/HexB family.

This protein is involved in the repair of mismatches in DNA. It is required for dam-dependent methyl-directed DNA mismatch repair. May act as a 'molecular matchmaker', a protein that promotes the formation of a stable complex between two or more DNA-binding proteins in an ATP-dependent manner without itself being part of a final effector complex. This is DNA mismatch repair protein MutL from Leuconostoc citreum (strain KM20).